A 317-amino-acid chain; its full sequence is Putative 2-hydroxyacid dehydrogenase SAR2389 (317 aa).

NAD(+)-binding positions include 155–156 (EI), 234–236 (ASR), and Asp-260. Arg-236 is an active-site residue. The active site involves Glu-265. His-283 serves as the catalytic Proton donor. 283 to 286 (HIGN) provides a ligand contact to NAD(+).

Belongs to the D-isomer specific 2-hydroxyacid dehydrogenase family.

In Staphylococcus aureus (strain MRSA252), this protein is Putative 2-hydroxyacid dehydrogenase SAR2389.